Here is a 159-residue protein sequence, read N- to C-terminus: MSITGQPHVYKKDTIIRLKPLSLNSNNRSYVFSSSKGNIQNIINHLNNLNKIVGRSLLGIWKINSYFGLSKDPSESKSKNPSVFNTAKTIFKSGGVDYSSQPKEIKSLLEAQNTRIKSLEKAIQSLDEKIEPEPLTKEEVKELKESINSIKEGLKNIIG.

The protein belongs to the caulimoviridae ORF II family.

In terms of biological role, this protein is involved in virus transmission. The polypeptide is Aphid transmission protein (Arabidopsis thaliana (Mouse-ear cress)).